We begin with the raw amino-acid sequence, 123 residues long: UPF0426 protein At1g28150, chloroplastic (123 aa).

The N-terminal 26 residues, 1 to 26 (MGFVLICTCPPSSGVVVSQLHHHQFS), are a transit peptide targeting the chloroplast. Residues 97–123 (SGITEEEVDADGVVSNDEDSPQQIEIE) are disordered. The span at 100–123 (TEEEVDADGVVSNDEDSPQQIEIE) shows a compositional bias: acidic residues.

It belongs to the UPF0426 family.

Its subcellular location is the plastid. It is found in the chloroplast. The protein localises to the plastoglobule. This is UPF0426 protein At1g28150, chloroplastic from Arabidopsis thaliana (Mouse-ear cress).